The chain runs to 485 residues: Arginine/agmatine antiporter (485 aa).

12 helical membrane-spanning segments follow: residues G12–Q34, A38–A60, I89–I111, G126–L148, S155–A177, T211–G230, V243–F265, V291–A313, W363–L385, I400–A422, Y427–G446, and I461–I483.

Belongs to the amino acid-polyamine-organocation (APC) superfamily. Basic amino acid/polyamine antiporter (APA) (TC 2.A.3.2) family.

It localises to the cell inner membrane. Catalyzes the exchange of L-arginine for agmatine. The arginine uptake by the bacterium in the macrophage may be a virulence factor against the host innate immune response. The chain is Arginine/agmatine antiporter (aaxC) from Chlamydia pneumoniae (Chlamydophila pneumoniae).